Reading from the N-terminus, the 107-residue chain is Cytochrome c2 (107 aa).

Glutamine 1 bears the Pyrrolidone carboxylic acid mark. Heme c is bound by residues cysteine 13, cysteine 16, histidine 17, and methionine 79.

It belongs to the cytochrome c family. In terms of processing, binds 1 heme c group covalently per subunit.

It is found in the periplasm. Its function is as follows. Cytochrome c2 is found mainly in purple, non-sulfur, photosynthetic bacteria where it functions as the electron donor to the oxidized bacteriochlorophyll in the photophosphorylation pathway. However, it may also have a role in the respiratory chain and is found in some non-photosynthetic bacteria. In Rhodoplanes tepidamans (Rhodoplanes cryptolactis), this protein is Cytochrome c2.